A 407-amino-acid chain; its full sequence is 1-deoxy-D-xylulose 5-phosphate reductoisomerase (407 aa).

The NADPH site is built by threonine 22, glycine 23, serine 24, isoleucine 25, glycine 48, asparagine 51, and asparagine 128. Lysine 129 is a binding site for 1-deoxy-D-xylulose 5-phosphate. Glutamate 130 contributes to the NADPH binding site. Aspartate 152 is a Mn(2+) binding site. 1-deoxy-D-xylulose 5-phosphate-binding residues include serine 153, glutamate 154, serine 178, and histidine 201. Glutamate 154 is a binding site for Mn(2+). Glycine 207 is a binding site for NADPH. 1-deoxy-D-xylulose 5-phosphate-binding residues include serine 214, asparagine 219, lysine 220, and glutamate 223. Residue glutamate 223 coordinates Mn(2+).

Belongs to the DXR family. Requires Mg(2+) as cofactor. The cofactor is Mn(2+).

It carries out the reaction 2-C-methyl-D-erythritol 4-phosphate + NADP(+) = 1-deoxy-D-xylulose 5-phosphate + NADPH + H(+). It participates in isoprenoid biosynthesis; isopentenyl diphosphate biosynthesis via DXP pathway; isopentenyl diphosphate from 1-deoxy-D-xylulose 5-phosphate: step 1/6. Catalyzes the NADPH-dependent rearrangement and reduction of 1-deoxy-D-xylulose-5-phosphate (DXP) to 2-C-methyl-D-erythritol 4-phosphate (MEP). The chain is 1-deoxy-D-xylulose 5-phosphate reductoisomerase from Mycobacterium avium (strain 104).